We begin with the raw amino-acid sequence, 250 residues long: Triosephosphate isomerase (250 aa).

Residue 9–11 participates in substrate binding; the sequence is NWK. The active-site Electrophile is the H95. The active-site Proton acceptor is the E167. Substrate is bound by residues G173, S213, and 234–235; that span reads GG.

The protein belongs to the triosephosphate isomerase family. In terms of assembly, homodimer.

Its subcellular location is the cytoplasm. It catalyses the reaction D-glyceraldehyde 3-phosphate = dihydroxyacetone phosphate. It participates in carbohydrate biosynthesis; gluconeogenesis. The protein operates within carbohydrate degradation; glycolysis; D-glyceraldehyde 3-phosphate from glycerone phosphate: step 1/1. Involved in the gluconeogenesis. Catalyzes stereospecifically the conversion of dihydroxyacetone phosphate (DHAP) to D-glyceraldehyde-3-phosphate (G3P). The sequence is that of Triosephosphate isomerase from Chloroflexus aurantiacus (strain ATCC 29366 / DSM 635 / J-10-fl).